The sequence spans 305 residues: Porphobilinogen deaminase (305 aa).

Cysteine 238 is modified (S-(dipyrrolylmethanemethyl)cysteine).

Belongs to the HMBS family. In terms of assembly, monomer. The cofactor is dipyrromethane.

The enzyme catalyses 4 porphobilinogen + H2O = hydroxymethylbilane + 4 NH4(+). It participates in porphyrin-containing compound metabolism; protoporphyrin-IX biosynthesis; coproporphyrinogen-III from 5-aminolevulinate: step 2/4. In terms of biological role, tetrapolymerization of the monopyrrole PBG into the hydroxymethylbilane pre-uroporphyrinogen in several discrete steps. In Rubrobacter xylanophilus (strain DSM 9941 / JCM 11954 / NBRC 16129 / PRD-1), this protein is Porphobilinogen deaminase.